We begin with the raw amino-acid sequence, 391 residues long: Origin recognition complex subunit 2 (391 aa).

Residues 1–43 form a disordered region; the sequence is MEEYTDSGEDKNVYSDDDNDYFTASTQNNRTSKNTDSSPLDPK. Over residues 22 to 38 the composition is skewed to polar residues; sequence FTASTQNNRTSKNTDSS.

Belongs to the ORC2 family. In terms of assembly, ORC is composed of six subunits.

It is found in the nucleus. Functionally, component of the origin recognition complex (ORC) that binds origins of replication. DNA-binding is ATP-dependent, however specific DNA sequences that define origins of replication have not been identified so far. ORC is required to assemble the pre-replication complex necessary to initiate DNA replication. The protein is Origin recognition complex subunit 2 (orcB) of Dictyostelium discoideum (Social amoeba).